The primary structure comprises 390 residues: Bibenzyl synthase (390 aa).

The active site involves Cys164.

The protein belongs to the thiolase-like superfamily. Chalcone/stilbene synthases family.

It catalyses the reaction 3-(3-hydroxyphenyl)-propanoyl-CoA + 3 malonyl-CoA + 3 H(+) = 3,3',5-trihydroxybibenzyl + 4 CO2 + 4 CoA. This Phalaenopsis sp. (Moth orchid) protein is Bibenzyl synthase (BIBSY212).